Here is a 776-residue protein sequence, read N- to C-terminus: 5-methyltetrahydropteroyltriglutamate--homocysteine methyltransferase (776 aa).

5-methyltetrahydropteroyltri-L-glutamate contacts are provided by residues 16 to 19 and Lys-112; that span reads RELK. L-homocysteine contacts are provided by residues 432 to 434 and Glu-485; that span reads IGS. L-methionine is bound by residues 432 to 434 and Glu-485; that span reads IGS. 5-methyltetrahydropteroyltri-L-glutamate is bound by residues 516 to 517 and Trp-562; that span reads RC. Asp-600 lines the L-homocysteine pocket. Asp-600 is an L-methionine binding site. Glu-606 is a 5-methyltetrahydropteroyltri-L-glutamate binding site. Zn(2+) is bound by residues His-642, Cys-644, and Glu-666. His-695 acts as the Proton donor in catalysis. Cys-727 contributes to the Zn(2+) binding site. Positions 755 to 776 are disordered; the sequence is HAGAVHAGTPATRAEHAESALA. Residues 767-776 show a composition bias toward basic and acidic residues; it reads RAEHAESALA.

The protein belongs to the vitamin-B12 independent methionine synthase family. Zn(2+) serves as cofactor.

The catalysed reaction is 5-methyltetrahydropteroyltri-L-glutamate + L-homocysteine = tetrahydropteroyltri-L-glutamate + L-methionine. Its pathway is amino-acid biosynthesis; L-methionine biosynthesis via de novo pathway; L-methionine from L-homocysteine (MetE route): step 1/1. Catalyzes the transfer of a methyl group from 5-methyltetrahydrofolate to homocysteine resulting in methionine formation. The protein is 5-methyltetrahydropteroyltriglutamate--homocysteine methyltransferase of Ralstonia nicotianae (strain ATCC BAA-1114 / GMI1000) (Ralstonia solanacearum).